Reading from the N-terminus, the 366-residue chain is Chorismate synthase (366 aa).

2 residues coordinate NADP(+): Arg-48 and Arg-54. FMN is bound by residues 125 to 127 (RSS), 238 to 239 (NA), Gly-278, 293 to 297 (KPTSS), and Arg-319.

It belongs to the chorismate synthase family. Homotetramer. FMNH2 is required as a cofactor.

It carries out the reaction 5-O-(1-carboxyvinyl)-3-phosphoshikimate = chorismate + phosphate. It participates in metabolic intermediate biosynthesis; chorismate biosynthesis; chorismate from D-erythrose 4-phosphate and phosphoenolpyruvate: step 7/7. Functionally, catalyzes the anti-1,4-elimination of the C-3 phosphate and the C-6 proR hydrogen from 5-enolpyruvylshikimate-3-phosphate (EPSP) to yield chorismate, which is the branch point compound that serves as the starting substrate for the three terminal pathways of aromatic amino acid biosynthesis. This reaction introduces a second double bond into the aromatic ring system. This Paraburkholderia phytofirmans (strain DSM 17436 / LMG 22146 / PsJN) (Burkholderia phytofirmans) protein is Chorismate synthase.